A 91-amino-acid polypeptide reads, in one-letter code: Probable Fe(2+)-trafficking protein (91 aa).

Belongs to the Fe(2+)-trafficking protein family.

Could be a mediator in iron transactions between iron acquisition and iron-requiring processes, such as synthesis and/or repair of Fe-S clusters in biosynthetic enzymes. This chain is Probable Fe(2+)-trafficking protein, found in Ralstonia nicotianae (strain ATCC BAA-1114 / GMI1000) (Ralstonia solanacearum).